The following is a 308-amino-acid chain: D-alanine--D-alanine ligase (308 aa).

An ATP-grasp domain is found at 105–302; the sequence is KAIFKALGLD…FPELCERILD (198 aa). 133–188 is a binding site for ATP; the sequence is DLPFGVPCVVKPAGEGSSVGVQIVKDAARLADACREAARYKGDVVVERYVKGTEVN. Residues aspartate 256, glutamate 269, and asparagine 271 each contribute to the Mg(2+) site.

The protein belongs to the D-alanine--D-alanine ligase family. Mg(2+) is required as a cofactor. Requires Mn(2+) as cofactor.

The protein localises to the cytoplasm. The enzyme catalyses 2 D-alanine + ATP = D-alanyl-D-alanine + ADP + phosphate + H(+). Its pathway is cell wall biogenesis; peptidoglycan biosynthesis. Cell wall formation. This chain is D-alanine--D-alanine ligase, found in Anaeromyxobacter sp. (strain Fw109-5).